The following is a 1315-amino-acid chain: MEKYHVLEMIGEGSFGRVYKGRRKYSAQVVALKFIPKLGRSEKELRNLQREIEIMRGLRHPNIVHMLDSFETDKEVVVVTDYAEGELLQILEDDGKLPEDQVQAIAAQLVSALYYLHSHRILHRDMKPQNILLAKGGGIKLCDFGFARAMSTNTMVLTSIKGTPLYMSPELVEERPYDHTADLWSVGCILYELAVGTPPFYATSIFQLVSLILKDPVRWPSTISPCFKNFLQGLLTKDPRQRLSWPDLLYHPFIAGHVTIITETAGPDLGTPFTSRLPPELQVLKDKQAHRLSPKGNQSRILTQAYERMAEEAMQKKHQNTGPALEQEDKTSKVAPGTAPLPRLGATPQESSLLAGILASELKSSWAESGTGEAPSAPRENRTTPDCERAFPEERPEVLGQRSTDAVDLEDEEPDSDNEWQHLLETTEPVPIQLKAPLTLLCNPDFCQRIQSQLHEAGGQILKGILEGASHILPAFRVLSSLLSSCSDSVALYSFCREAGLPGLLLSLLRHSQESNSLQQQSWYGTFLQDLMAVIQAYFACTFNLERSQTSDSLQVFQEAANLFLDLLGKLLAQPDDSERTLRRDNLMCFTVLCEAMDGNSRAISKAFYSSLLTTKQVVLDGLLRGLTVPQLPVHTPPGAPQVSQPLREQSEDIPGAISSALAAICTAPVGLPDCWDGKEQVCWHLANQLTEDSSQLRPSLVSGLQHPILCLHLLKVLYSCCLVSERLCRLLGQEPLALESLFMLVQGKVKVVDWEESTEVTLYFLSLLVFRLQNLPCGMEKLGSDVATLFTHSHVASLVSAAACLLGQLGQQGVTFDLQPMEWMAAATHALSAPAEVRLTPPGSCGFYDGLLILLLQLLTEQGKASLIRDMSSSEMWTVLRHRFSMVLRLPKEASAQEGELSLSNPPSPEPDWTLISPQGMAALLSLAMATFAQEPQLCLSCLSQHGSILMSILKHLLCPSFLNQLRQAPHGSEFLPVVVLSVCQLLCFPFALDMDADLLIGVLADLRDSEVAAHLLQVCCYHLPLTQVELPISLLTRLALTDPTSLNQFVNTVAASPRTIISFLSVALLSDQPLLTSDLLSLLAHTARVLSPSHLSFIQELLAGSDESYQSLRSLLGHPENSVRAHTYRLLGHLLQHSMALRGALQSQSGLLSLLLLGLGDKDPVVRCSASFAVGNAAYQAGPLGPALAAAVPSMTQLLGDPQAGIRRNVASALGNLGLEGLGEELLQCQVPQRLLEMACGDPQPNVKEAALIALRSLQQEPGIRQVLVSLGASEKLALLSLGNQLLPHSSPRPASAKHCRKLIHLLRPAHSM.

The Protein kinase domain occupies 4 to 254; sequence YHVLEMIGEG…WPDLLYHPFI (251 aa). ATP is bound by residues 10–18 and Lys33; that span reads IGEGSFGRV. Asp125 serves as the catalytic Proton acceptor. Disordered regions lie at residues 312 to 345 and 365 to 405; these read EAMQ…PRLG and SWAE…RSTD. The segment covering 379 to 397 has biased composition (basic and acidic residues); it reads RENRTTPDCERAFPEERPE.

Belongs to the protein kinase superfamily. Ser/Thr protein kinase family. As to quaternary structure, interacts with SPAG16 and KIF27. Requires Mg(2+) as cofactor.

It is found in the cytoplasm. It localises to the nucleus. Its subcellular location is the cytoskeleton. The protein resides in the cilium axoneme. The catalysed reaction is L-seryl-[protein] + ATP = O-phospho-L-seryl-[protein] + ADP + H(+). It catalyses the reaction L-threonyl-[protein] + ATP = O-phospho-L-threonyl-[protein] + ADP + H(+). In terms of biological role, serine/threonine protein kinase which plays an important role in the sonic hedgehog (Shh) pathway by regulating the activity of GLI transcription factors. Controls the activity of the transcriptional regulators GLI1, GLI2 and GLI3 by opposing the effect of SUFU and promoting their nuclear localization. GLI2 requires an additional function of STK36 to become transcriptionally active, but the enzyme does not need to possess an active kinase catalytic site for this to occur. Required for postnatal development, possibly by regulating the homeostasis of cerebral spinal fluid or ciliary function. Essential for construction of the central pair apparatus of motile cilia. The protein is Serine/threonine-protein kinase 36 of Pongo abelii (Sumatran orangutan).